The following is a 1005-amino-acid chain: Band 4.1-like protein 2 (1005 aa).

Residues 1-80 (MTTEVGSVSE…SRGISRFIPP (80 aa)) are disordered. The residue at position 2 (threonine 2) is an N-acetylthreonine. Phosphoserine is present on serine 7. Residues 22-31 (ATKEKPKEVA) show a composition bias toward basic and acidic residues. Serine 39, serine 58, and serine 87 each carry phosphoserine. Threonine 89 bears the Phosphothreonine mark. The interval 93 to 196 (AKDGGDKKEP…GGAAKRETKE (104 aa)) is disordered. 2 stretches are compositionally biased toward basic and acidic residues: residues 111–157 (VLDK…EKPS) and 169–196 (VSKE…ETKE). Glycyl lysine isopeptide (Lys-Gly) (interchain with G-Cter in SUMO2) cross-links involve residues lysine 140 and lysine 144. Phosphoserine occurs at positions 170, 208, 386, 402, 499, 550, 562, 575, 598, and 614. Positions 218 to 499 (VQCKVTLLDG…EHHTFYRLVS (282 aa)) constitute an FERM domain. Positions 502–610 (QPPKAKFLTL…KAPHLQLIEG (109 aa)) are hydrophilic. The interval 611 to 676 (KKNSLRVEGD…WEKRRITPLS (66 aa)) is spectrin--actin-binding. Tyrosine 623 is modified (phosphotyrosine). Residues serine 627 and serine 647 each carry the phosphoserine modification. The tract at residues 652–800 (KRNFMESTPE…EEAVPEASPV (149 aa)) is disordered. The span at 675–686 (LSLQTQGSSHET) shows a compositional bias: polar residues. Residues 690–711 (VEEKKRAEVGKDERVITEEMNG) show a composition bias toward basic and acidic residues. A phosphoserine mark is found at serine 715 and serine 718. Over residues 734–746 (STSLSSESSSSSS) the composition is skewed to low complexity. Basic and acidic residues-rich tracts occupy residues 754-770 (GEYR…IREE) and 780-793 (EPRP…REEA). Position 763 is a phosphothreonine (threonine 763). Serine 828 carries the post-translational modification Phosphoserine. The tract at residues 855–1005 (HVDIDVLPQI…ETELAEEGED (151 aa)) is C-terminal (CTD).

In terms of assembly, interacts with FCGR1A. Interacts with TRPC4. Interacts (via CTD domain) with FKBP2. Interacts with NUMA1; this interaction is negatively regulated by CDK1 during metaphase and promotes anaphase-specific localization of NUMA1 in symmetrically dividing cells. As to expression, widely expressed.

Its subcellular location is the cytoplasm. It localises to the cytoskeleton. It is found in the cell cortex. The protein localises to the cell membrane. In terms of biological role, required for dynein-dynactin complex and NUMA1 recruitment at the mitotic cell cortex during anaphase. The sequence is that of Band 4.1-like protein 2 from Homo sapiens (Human).